A 162-amino-acid chain; its full sequence is Calcium-binding protein 4b (162 aa).

EF-hand domains lie at 10 to 45 (ELTN…CKYP), 46 to 81 (NPTL…DYII), 85 to 120 (TCLK…SGSN), and 123 to 158 (QAKV…YFEI). 10 residues coordinate Ca(2+): Asp23, Asn25, Asp27, Gln29, Glu34, Asp59, Asp61, Asp63, Lys65, and Glu70. The Ca(2+) site is built by Asp136, Asp138, Asp140, Cys142, and Glu147.

The protein is Calcium-binding protein 4b (cbpD2) of Dictyostelium discoideum (Social amoeba).